Consider the following 416-residue polypeptide: Keratin, type I cuticular Ha1 (416 aa).

A head region spans residues 2–56; the sequence is PYNCCLPALSCRTSCSSRPCVPPSCHGCTLPGACNIPANVGNCNWFCEGSFNGNE. An IF rod domain is found at 56–367; it reads EKETMQFLND…GLLESEDCKL (312 aa). Residues 57–91 are coil 1A; that stretch reads KETMQFLNDRLASYMEKVRQLERENAELECRIQER. A linker 1 region spans residues 92–102; the sequence is NQQQDPLVCPA. A coil 1B region spans residues 103–203; that stretch reads YQAYFRTIEE…HEEEVNTLRC (101 aa). The tract at residues 204 to 219 is linker 12; it reads QLGDRLNVEVDAAPTV. The coil 2 stretch occupies residues 220–363; sequence DLNRVLNETR…NTYRGLLESE (144 aa). The tract at residues 364 to 416 is tail; the sequence is DCKLPCNPCATSNACGKPIGPCVSNPCVPCPPPAPCTPCVPRPRCGPCNSFVR.

It belongs to the intermediate filament family.

The sequence is that of Keratin, type I cuticular Ha1 (Krt31) from Mus musculus (Mouse).